Here is a 151-residue protein sequence, read N- to C-terminus: Ribonuclease P protein component (151 aa).

Residues 1–62 (MDEKDLATQP…LKGDSAFRRL (62 aa)) are disordered. Positions 28–48 (GAQGAEAQAAEGPLAAHAQGA) are enriched in low complexity.

The protein belongs to the RnpA family. In terms of assembly, consists of a catalytic RNA component (M1 or rnpB) and a protein subunit.

The enzyme catalyses Endonucleolytic cleavage of RNA, removing 5'-extranucleotides from tRNA precursor.. Functionally, RNaseP catalyzes the removal of the 5'-leader sequence from pre-tRNA to produce the mature 5'-terminus. It can also cleave other RNA substrates such as 4.5S RNA. The protein component plays an auxiliary but essential role in vivo by binding to the 5'-leader sequence and broadening the substrate specificity of the ribozyme. This chain is Ribonuclease P protein component, found in Thermus oshimai.